The primary structure comprises 430 residues: Pre-B-cell leukemia transcription factor 2 (430 aa).

Residues 1-52 (MDERLLGPPPPGGGRGGLGLVSGEPGGPGEPPGGGDPGGGSGGVPGGRGKQD) are disordered. The segment covering 13–48 (GGRGGLGLVSGEPGGPGEPPGGGDPGGGSGGVPGGR) has biased composition (gly residues). Residues 48–243 (RGKQDIGDIL…VMILRSRFLD (196 aa)) form the PBC domain. Positions 55 to 134 (DILQQIMTIT…EGVAGPEKGG (80 aa)) are PBC-A. Residues S136, S151, and S159 each carry the phosphoserine modification. A PBC-B region spans residues 137–243 (AAAAAAAAAS…VMILRSRFLD (107 aa)). The homeobox; TALE-type DNA-binding region spans 244–306 (ARRKRRNFSK…NKRIRYKKNI (63 aa)). Disordered stretches follow at residues 326-347 (QGGH…GGSF) and 378-430 (SMGP…DTSN). The residue at position 330 (S330) is a Phosphoserine. The segment covering 380-392 (GPGGYGDNLGGGQ) has biased composition (gly residues). S395 carries the post-translational modification Phosphoserine. The span at 403-418 (GSWQEAVTPSSVTSPT) shows a compositional bias: polar residues.

Belongs to the TALE/PBX homeobox family. Forms heterodimers with MEIS1 and heterotrimers with MEIS1 and HOXA9. Interacts with PBXIP1. Ubiquitously expressed.

Its subcellular location is the nucleus. Functionally, transcriptional activator that binds the sequence 5'-ATCAATCAA-3'. Activates transcription of PF4 in complex with MEIS1. This chain is Pre-B-cell leukemia transcription factor 2 (PBX2), found in Homo sapiens (Human).